We begin with the raw amino-acid sequence, 480 residues long: tRNA-2-methylthio-N(6)-dimethylallyladenosine synthase (480 aa).

The MTTase N-terminal domain occupies 43–161; sequence KLYCLNTFGC…FPELLYSAMD (119 aa). Positions 52, 88, 122, 198, 202, and 205 each coordinate [4Fe-4S] cluster. One can recognise a Radical SAM core domain in the interval 184–414; the sequence is RKDGVKAWVT…LETQNRISKE (231 aa). In terms of domain architecture, TRAM spans 417 to 480; sequence DTFLGKVVEV…TWSLEGSIVR (64 aa).

Belongs to the methylthiotransferase family. MiaB subfamily. In terms of assembly, monomer. [4Fe-4S] cluster is required as a cofactor.

Its subcellular location is the cytoplasm. It catalyses the reaction N(6)-dimethylallyladenosine(37) in tRNA + (sulfur carrier)-SH + AH2 + 2 S-adenosyl-L-methionine = 2-methylsulfanyl-N(6)-dimethylallyladenosine(37) in tRNA + (sulfur carrier)-H + 5'-deoxyadenosine + L-methionine + A + S-adenosyl-L-homocysteine + 2 H(+). In terms of biological role, catalyzes the methylthiolation of N6-(dimethylallyl)adenosine (i(6)A), leading to the formation of 2-methylthio-N6-(dimethylallyl)adenosine (ms(2)i(6)A) at position 37 in tRNAs that read codons beginning with uridine. The polypeptide is tRNA-2-methylthio-N(6)-dimethylallyladenosine synthase (Acetivibrio thermocellus (strain ATCC 27405 / DSM 1237 / JCM 9322 / NBRC 103400 / NCIMB 10682 / NRRL B-4536 / VPI 7372) (Clostridium thermocellum)).